The chain runs to 592 residues: A-type ATP synthase subunit A (592 aa).

Position 231 to 238 (231 to 238 (GGFGTGKT)) interacts with ATP.

This sequence belongs to the ATPase alpha/beta chains family. In terms of assembly, has multiple subunits with at least A(3), B(3), C, D, E, F, H, I and proteolipid K(x).

It is found in the cell membrane. It catalyses the reaction ATP + H2O + 4 H(+)(in) = ADP + phosphate + 5 H(+)(out). Functionally, component of the A-type ATP synthase that produces ATP from ADP in the presence of a proton gradient across the membrane. The A chain is the catalytic subunit. The sequence is that of A-type ATP synthase subunit A from Staphylothermus marinus (strain ATCC 43588 / DSM 3639 / JCM 9404 / F1).